Here is a 217-residue protein sequence, read N- to C-terminus: Small ribosomal subunit protein uS3 (217 aa).

The KH type-2 domain occupies 38 to 106; it reads IRKFIQKELA…QVHINIVEIK (69 aa).

It belongs to the universal ribosomal protein uS3 family. As to quaternary structure, part of the 30S ribosomal subunit. Forms a tight complex with proteins S10 and S14.

Functionally, binds the lower part of the 30S subunit head. Binds mRNA in the 70S ribosome, positioning it for translation. The chain is Small ribosomal subunit protein uS3 from Streptococcus thermophilus (strain CNRZ 1066).